The following is a 436-amino-acid chain: MSELQQVRNAKGDRIAIVMGLRTPFAKQATAFHGVSALDMGKMVVNELLSRSELDPKEIEQLVYGQVVQMPAAPNIAREIVLGTGMNVSTDAYSVTRACATSFQSTVNVAESIMTGNIEIGIAGGADSSSVLPIGVSKKLAHALVDLNKARSFGQKWAIIRRLGLKDLLPVPPAVAEYSTGLSMGQTAEQMAKTYNISRADQDALAHRSHTLATETWDSGHLRDEVMVAHVPPYKSFIDRDNNIRENSSLDSYAKLRPAFDRKHGSVTAANSTPLTDGASAVLLMSESRAKALGYEPIGYIKSYAFSAIDVWQDMLMGPSYATPLALKRAGMELEDLTLIEMHEAFAAQTLANMQMFASKKFAKEKLGRDRAIGEIDMTKFNVLGGSLAYGHPFAATGTRLITQVCRELKRRGGGTGLATACAAGGLGAAMIVEVE.

The Acyl-thioester intermediate role is filled by cysteine 99. Residues histidine 392 and cysteine 422 each act as proton acceptor in the active site.

This sequence belongs to the thiolase-like superfamily. Thiolase family. In terms of assembly, heterotetramer of two alpha chains (FadJ) and two beta chains (FadI).

It localises to the cytoplasm. It catalyses the reaction an acyl-CoA + acetyl-CoA = a 3-oxoacyl-CoA + CoA. The protein operates within lipid metabolism; fatty acid beta-oxidation. Catalyzes the final step of fatty acid oxidation in which acetyl-CoA is released and the CoA ester of a fatty acid two carbons shorter is formed. In Shewanella loihica (strain ATCC BAA-1088 / PV-4), this protein is 3-ketoacyl-CoA thiolase.